The following is a 385-amino-acid chain: MANFLKLKQFLTLVLILLALAAKSSKSTPSPSSTTRVKGIYWIENPLFPPSSIDTSLFTHIFYAFVSPNKFTYKLEEEEEDSTTVATSLTTFTNTFKTKTPPIPTLLSIGGATSNSTLFAFIASDPTARATFINSTIQVARTFGFDGIDFDWEFPTTTKEMNDLGELLFQWRRAISDETASTSRPPLLLTAAVYFAVNFFLSGERRMYPVDSINKNLDWVNVMSYDLRGSGSNVTGAPSGMFDSKSNVSVVSGLFSWIRGGVAPEKIVMGMPLYGKSWKLQDPNVHGIGAPNVGPGPGVDGGMAYFQVVDFNKQMGAKVVYDKETGSVYSYSGSTWIGYDDPFTVSVKVGFAQALKLGGYFFWAAGYDTSDWKVSTASKAWRPES.

The first 21 residues, M1–A21, serve as a signal peptide directing secretion. The 350-residue stretch at R36–S385 folds into the GH18 domain. N-linked (GlcNAc...) asparagine glycans are attached at residues N115 and N134. E153 serves as the catalytic Proton donor. 2 N-linked (GlcNAc...) asparagine glycosylation sites follow: N233 and N247.

This sequence belongs to the glycosyl hydrolase 18 family. Chitinase class V subfamily.

Symbiotic enzyme that hydrolytically inactivates Nod factors (NFs) with a C16:2 acyl chain produced by the microsymbiont Sinorhizobium meliloti. NFs are lipo-chitooligosaccharide signaling molecules produced by nitrogen-fixing rhizobia to initiate nodulation (symbiosis) on the roots of legumes. Controls NF hydrolysis at the stage of root hair infection. Involved in the regulation of growth and branching of mature nodules. Modulates NF levels and signaling to complete transition of infected nodules to functional nitrogen-fixing organs. Lacks chitinase activity in vitro toward glycol chitin, carboxymethyl-chitin, colloidal chitin, and the chitin oligosaccharides (N-acetylglucosamine) (GlcNAc)6 and (GlcNAc)5. This Medicago truncatula (Barrel medic) protein is Nod factor hydrolase protein 1.